The following is a 129-amino-acid chain: uncharacterized protein (129 aa).

A disordered region spans residues 34–57; sequence SAPLRPPRELHAAPPPATPTQTVV.

This is an uncharacterized protein from Homo sapiens (Human).